Here is a 74-residue protein sequence, read N- to C-terminus: Protein SlyX homolog (74 aa).

The protein belongs to the SlyX family.

The chain is Protein SlyX homolog from Neisseria meningitidis serogroup C / serotype 2a (strain ATCC 700532 / DSM 15464 / FAM18).